The chain runs to 335 residues: MTAPSKPVLVADIGGTNARFALADVDASVPLLDDTSREFAVVDFTSLGEAARYYLDQIGVQATQGVFAVAGRVDGDEARITNHPWVISRSRTASMLGFSTLHLINDFAAQAMAISLLRPQDVVQVGGASWRPAPIDQPRNYGVIGPGTGLGVGGLIIRHGRCFPLETEGGHVSFPPGTPEEIRILEILSEQFGRVSNERLICGPGLVNIHRALSEIAGVDPGPLQPKDITARAAAGDPRSSRTIDLFCAIFGAIAGDMVLMQGAWDGVFLTGGLVPKVLDSLQHSGFRQRFEHKGRFSAIMSRVPSLAVMHPHAGLLGAAAYAVDAQRQPPGEQR.

Position 11–16 (11–16 (ADIGGT)) interacts with ATP.

Belongs to the bacterial glucokinase family.

The protein localises to the cytoplasm. The catalysed reaction is D-glucose + ATP = D-glucose 6-phosphate + ADP + H(+). This chain is Glucokinase, found in Xanthomonas oryzae pv. oryzae (strain MAFF 311018).